We begin with the raw amino-acid sequence, 38 residues long: Photosystem II reaction center protein L (38 aa).

The helical transmembrane segment at 17-37 threads the bilayer; that stretch reads SLFWGLLLIFVLAVLFSSYFF.

It belongs to the PsbL family. In terms of assembly, PSII is composed of 1 copy each of membrane proteins PsbA, PsbB, PsbC, PsbD, PsbE, PsbF, PsbH, PsbI, PsbJ, PsbK, PsbL, PsbM, PsbT, PsbX, PsbY, PsbZ, Psb30/Ycf12, at least 3 peripheral proteins of the oxygen-evolving complex and a large number of cofactors. It forms dimeric complexes.

The protein resides in the plastid. It is found in the chloroplast thylakoid membrane. One of the components of the core complex of photosystem II (PSII). PSII is a light-driven water:plastoquinone oxidoreductase that uses light energy to abstract electrons from H(2)O, generating O(2) and a proton gradient subsequently used for ATP formation. It consists of a core antenna complex that captures photons, and an electron transfer chain that converts photonic excitation into a charge separation. This subunit is found at the monomer-monomer interface and is required for correct PSII assembly and/or dimerization. The polypeptide is Photosystem II reaction center protein L (Gracilaria tenuistipitata var. liui (Red alga)).